The sequence spans 161 residues: tRNA-acetylating toxin 1 (161 aa).

Acetyl-CoA contacts are provided by L92, V94, H99, G100, G102, G104, A105, L132, and E135. Residue Y140 is part of the active site. Residue H142 participates in acetyl-CoA binding.

This sequence belongs to the acetyltransferase family. GNAT subfamily. In terms of assembly, homodimer (in absence of antitoxin). Forms a complex with cognate antitoxin TacA1. Forms a 4:2 antitoxin:toxin complex with cognate antitoxin TacA1.

The enzyme catalyses glycyl-tRNA(Gly) + acetyl-CoA = N-acetylglycyl-tRNA(Gly) + CoA + H(+). Toxic component of a type II toxin-antitoxin (TA) system. Acetylates tRNA and inhibits translation, does not acetylate uncharged tRNA. Upon expression in situ acetylates only Gly-tRNA(Gly). In vitro acetylates mainly Gly and Ile/Leu. Upon induction of the toxin gene in lag phase in rich medium (but not mid-exponential phase) the lag phase is extended by several hours, locking bacteria in a non-growth state. Neutralized only by cognate antitoxin TacA1 (A8), but not by TacA2 or TacA3. Its toxic effect is neutralized by expression of peptidyl-tRNA hydrolase (pth) in lag phase. NAD-dependent protein deacylase (cobB) also play a role in detoxifying TacT targets. Expression increases persister cell formation, which is also abolished by either cognate antitoxin or Pth expression. Plays a role in persister cell formation. In terms of biological role, the TacA1-TacT1 complex binds (and probably represses) its own promoter DNA but not that of tacA3-tacT3, it does not repress the tacA3-tacT3 promoter. This chain is tRNA-acetylating toxin 1, found in Salmonella typhimurium (strain 14028s / SGSC 2262).